The sequence spans 178 residues: Large ribosomal subunit protein uL6 (178 aa).

This sequence belongs to the universal ribosomal protein uL6 family. In terms of assembly, part of the 50S ribosomal subunit.

Its function is as follows. This protein binds to the 23S rRNA, and is important in its secondary structure. It is located near the subunit interface in the base of the L7/L12 stalk, and near the tRNA binding site of the peptidyltransferase center. This chain is Large ribosomal subunit protein uL6, found in Helicobacter pylori (strain Shi470).